The chain runs to 371 residues: Undecaprenyl-diphosphatase 1 (371 aa).

The next 3 helical transmembrane spans lie at 53-73, 100-120, and 126-146; these read PYLA…IVAF, LAWL…LLEH, and LGRP…MLLG. A disordered region spans residues 152 to 226; sequence RSTTRGAPGP…PEAEDVTLPE (75 aa). 3 helical membrane-spanning segments follow: residues 291–311, 322–342, and 351–371; these read FAFL…LPDL, QTLF…RFLA, and TPFA…FGIF.

This sequence belongs to the UppP family.

Its subcellular location is the cell membrane. It carries out the reaction di-trans,octa-cis-undecaprenyl diphosphate + H2O = di-trans,octa-cis-undecaprenyl phosphate + phosphate + H(+). Its function is as follows. Catalyzes the dephosphorylation of undecaprenyl diphosphate (UPP). Confers resistance to bacitracin. The sequence is that of Undecaprenyl-diphosphatase 1 from Frankia casuarinae (strain DSM 45818 / CECT 9043 / HFP020203 / CcI3).